The chain runs to 221 residues: Endo-1,4-beta-xylanase 2 (221 aa).

The first 19 residues, M1–S19, serve as a signal peptide directing secretion. Residues Q32–S221 enclose the GH11 domain. N-linked (GlcNAc...) asparagine glycans are attached at residues N69 and N92. E117 serves as the catalytic Nucleophile. Catalysis depends on E208, which acts as the Proton donor.

This sequence belongs to the glycosyl hydrolase 11 (cellulase G) family.

The protein localises to the secreted. It catalyses the reaction Endohydrolysis of (1-&gt;4)-beta-D-xylosidic linkages in xylans.. Its pathway is glycan degradation; xylan degradation. Functionally, endo-1,4-beta-xylanase involved in the hydrolysis of xylan, a major structural heterogeneous polysaccharide found in plant biomass representing the second most abundant polysaccharide in the biosphere, after cellulose. In Trichoderma harzianum (Hypocrea lixii), this protein is Endo-1,4-beta-xylanase 2 (Xyn2).